The primary structure comprises 504 residues: MADKYILAIDEGTTSTRTIIFDHAGNKMADAQREFPQYFPKPGWVEHNANEIWNAVLSTIANAFIESGIKPNQISGIGITNQRETTVIWDKKTGLPIYNAVVWQSRQTAEIAEQLVKDGYGDMIHQKTGLVTDAYFSATKIRWILDHVDGAQARAERGELLFGTIDTWLMWKLTDGDVHVTDYSNASRTMLYNIHKLEWDKEILALLNIPASMLPEVKPNSTIYGKTKDYHFYGSEVPISGMAGDQQAALFGQLAFEPGMVKNTYGTGAFTVMNTGEKPQLSDNNLLTTIGYGINGKVYYALEGSIFVAGSAIQWLRDGMKLFKKASESEAAAVASQNDNEVYVVPAFTGLGAPYWDPNARGSVFGITRGTTREDFIKATLQSLAYQSRDVIDTMKKDSGIDIPSIRVDGGASNNDYLMQFQSDILGIEIDRASDLETTALGAAFLAGLAVGFWKDLEDLKKEYKPGKVFKPKMSTDEREDLYTGWQEAVAATRQFKHRPRQSK.

Thr13 is an ADP binding site. ATP-binding residues include Thr13, Thr14, and Ser15. Residue Thr13 participates in sn-glycerol 3-phosphate binding. An ADP-binding site is contributed by Arg17. Residues Arg83, Glu84, and Tyr135 each contribute to the sn-glycerol 3-phosphate site. Arg83, Glu84, and Tyr135 together coordinate glycerol. His231 is subject to Phosphohistidine; by HPr. Asp245 serves as a coordination point for sn-glycerol 3-phosphate. 2 residues coordinate glycerol: Asp245 and Gln246. Thr267 and Gly310 together coordinate ADP. The ATP site is built by Thr267, Gly310, Gln314, and Gly411. ADP contacts are provided by Gly411 and Asn415.

Belongs to the FGGY kinase family. Homotetramer and homodimer (in equilibrium). Post-translationally, the phosphoenolpyruvate-dependent sugar phosphotransferase system (PTS), including enzyme I, and histidine-containing protein (HPr) are required for the phosphorylation, which leads to the activation of the enzyme.

It catalyses the reaction glycerol + ATP = sn-glycerol 3-phosphate + ADP + H(+). It participates in polyol metabolism; glycerol degradation via glycerol kinase pathway; sn-glycerol 3-phosphate from glycerol: step 1/1. Activated by phosphorylation and inhibited by fructose 1,6-bisphosphate (FBP). In terms of biological role, key enzyme in the regulation of glycerol uptake and metabolism. Catalyzes the phosphorylation of glycerol to yield sn-glycerol 3-phosphate. The chain is Glycerol kinase from Pediococcus pentosaceus (strain ATCC 25745 / CCUG 21536 / LMG 10740 / 183-1w).